The following is a 427-amino-acid chain: MNRNEILFDRAKAIIPGGVNSPVRAFGSVGGVPRFIKKAEGAYVWDENGTRYTDYVGSWGPAIVGHAHPEVIEAMREAALGGLSFGAPTEGEIVIAEEIAKIMPSVERLRLVSSGTEATMTAIRLARGFTGRDKIIKFEGCYHGHSDSLLVKAGSGLLTFGNPSSAGVPADFTKHTLVLEYNNIAQLEEAFAQSGNDIACVILEPFVGNMNLVRPSEAFVKALRELTEKHGAVLIYDEVMTGFRVALGGAQSLHGITPDLTTMGKVIGGGMPLAAFGGRKDIMECISPLGGVYQAGTLSGNPIAVAAGLKTLEIIRREGFYENLTARTEQLVQGFRTAADAAGIEFTADSVGGMFGLYFAAHAPRNYADMARSNIDAFKRFFHGMLDRGIAFGPSAYEAGFVSAAHTPELIDETVAVAVEVFKAMAA.

N6-(pyridoxal phosphate)lysine is present on Lys-265.

This sequence belongs to the class-III pyridoxal-phosphate-dependent aminotransferase family. HemL subfamily. In terms of assembly, homodimer. Pyridoxal 5'-phosphate serves as cofactor.

The protein resides in the cytoplasm. It catalyses the reaction (S)-4-amino-5-oxopentanoate = 5-aminolevulinate. The protein operates within porphyrin-containing compound metabolism; protoporphyrin-IX biosynthesis; 5-aminolevulinate from L-glutamyl-tRNA(Glu): step 2/2. This chain is Glutamate-1-semialdehyde 2,1-aminomutase, found in Neisseria meningitidis serogroup C / serotype 2a (strain ATCC 700532 / DSM 15464 / FAM18).